Reading from the N-terminus, the 350-residue chain is Atypical chemokine receptor 4 (350 aa).

At 1–42 (MALEQNQSTDYYYEENEMNGTYDYSQYELICIKEDVREFAKV) the chain is on the extracellular side. 2 N-linked (GlcNAc...) asparagine glycosylation sites follow: Asn-6 and Asn-19. A helical transmembrane segment spans residues 43-63 (FLPVFLTIVFVIGLAGNSMVV). Residues 64-87 (AIYAYYKKQRTKTDVYILNLAVAD) lie on the Cytoplasmic side of the membrane. The helical transmembrane segment at 88–108 (LLLLFTLPFWAVNAVHGWVLG) threads the bilayer. Residues 109–113 (KIMCK) lie on the Extracellular side of the membrane. A disulfide bridge links Cys-112 with Cys-184. A helical transmembrane segment spans residues 114 to 134 (ITSALYTLNFVSGMQFLACIS). The Cytoplasmic portion of the chain corresponds to 135–154 (IDRYVAVTKVPSQSGVGKPC). The chain crosses the membrane as a helical span at residues 155–175 (WIICFCVWMAAILLSIPQLVF). The Extracellular segment spans residues 176–201 (YTVNDNARCIPIFPRYLGTSMKALIQ). The chain crosses the membrane as a helical span at residues 202–222 (MLEICIGFVVPFLIMGVCYFI). Over 223–240 (TARTLMKMPNIKISRPLK) the chain is Cytoplasmic. A helical membrane pass occupies residues 241 to 261 (VLLTVVIVFIVTQLPYNIVKF). Residues 262 to 289 (CRAIDIIYSLITSCNMSKRMDIAIQVTE) lie on the Extracellular side of the membrane. A helical membrane pass occupies residues 290–310 (SIALFHSCLNPILYVFMGASF). Over 311 to 350 (KNYVMKVAKKYGSWRRQRQSVEEFPFDSEGPTEPTSTFSI) the chain is Cytoplasmic.

The protein belongs to the G-protein coupled receptor 1 family. Atypical chemokine receptor subfamily. Forms heteromers with CXCR3. Interacts with ARRB1 and ARRB2. In terms of processing, the Ser/Thr residues in the C-terminal cytoplasmic tail may be phosphorylated. In terms of tissue distribution, predominantly expressed in heart. Lower expression in lung, pancreas, spleen, colon, skeletal muscle and small intestine.

It is found in the early endosome. It localises to the recycling endosome. The protein resides in the cell membrane. Atypical chemokine receptor that controls chemokine levels and localization via high-affinity chemokine binding that is uncoupled from classic ligand-driven signal transduction cascades, resulting instead in chemokine sequestration, degradation, or transcytosis. Also known as interceptor (internalizing receptor) or chemokine-scavenging receptor or chemokine decoy receptor. Acts as a receptor for chemokines CCL2, CCL8, CCL13, CCL19, CCL21 and CCL25. Chemokine-binding does not activate G-protein-mediated signal transduction but instead induces beta-arrestin recruitment, leading to ligand internalization. Plays an important role in controlling the migration of immune and cancer cells that express chemokine receptors CCR7 and CCR9, by reducing the availability of CCL19, CCL21, and CCL25 through internalization. Negatively regulates CXCR3-induced chemotaxis. Regulates T-cell development in the thymus. This chain is Atypical chemokine receptor 4 (ACKR4), found in Homo sapiens (Human).